A 146-amino-acid polypeptide reads, in one-letter code: Leghemoglobin alpha (146 aa).

One can recognise a Globin domain in the interval 3 to 146 (AFTEKQEALV…LAAAIKKAYA (144 aa)). 2 positions are modified to nitrated tyrosine: Y26 and Y31. S46 is a binding site for heme b. S46 is modified (phosphoserine). Residue H62 coordinates O2. Heme b-binding residues include H93 and K96. Y134 bears the Nitrated tyrosine mark.

Belongs to the plant globin family. In terms of assembly, monomer. Nitrated mainly at Tyr-31 and, to a lower extent, at Tyr-26 and Tyr-134, in effective nodules and particularly in hypoxic conditions; this mechanism may play a protective role in the symbiosis by buffering toxic peroxynitrite NO(2)(-). Nitration level decrease during nodule senescence. In terms of processing, phosphorylation at Ser-46 disrupts the molecular environment of its porphyrin ring oxygen binding pocket, thus leading to a reduced oxygen consumption and to the delivery of oxygen O(2) to symbiosomes. In terms of tissue distribution, root nodules.

It is found in the cytoplasm. Its subcellular location is the cytosol. It localises to the nucleus. In terms of biological role, leghemoglobin that reversibly binds oxygen O(2) through a pentacoordinated heme iron. In root nodules, facilitates the diffusion of oxygen to the bacteroids while preventing the bacterial nitrogenase from being inactivated by buffering dioxygen, nitric oxide and carbon monoxide, and promoting the formation of reactive oxygen species (ROS, e.g. H(2)O(2)). This role is essential for symbiotic nitrogen fixation (SNF). The sequence is that of Leghemoglobin alpha from Phaseolus vulgaris (Kidney bean).